A 161-amino-acid polypeptide reads, in one-letter code: DNA-directed RNA polymerase III subunit RPC9 (161 aa).

A disordered region spans residues 75–96 (QEDEGEERESSGAKDAEKSGIS). The segment covering 82–96 (RESSGAKDAEKSGIS) has biased composition (basic and acidic residues).

The protein belongs to the eukaryotic RPC9 RNA polymerase subunit family. As to quaternary structure, component of the RNA polymerase III (Pol III) complex consisting of 17 subunits. Forms a Pol III subcomplex with RPC25/RPC8. Interacts with BURF1/TDS4.

It localises to the nucleus. In terms of biological role, DNA-dependent RNA polymerase catalyzes the transcription of DNA into RNA using the four ribonucleoside triphosphates as substrates. Specific peripheric component of RNA polymerase III which synthesizes small RNAs, such as 5S rRNA and tRNAs. The RPC25/RPC8-RPC17/RPC9 subcomplex may bind Pol III transcripts emerging from the adjacent exit pore during elongation. The chain is DNA-directed RNA polymerase III subunit RPC9 (RPC17) from Saccharomyces cerevisiae (strain ATCC 204508 / S288c) (Baker's yeast).